A 532-amino-acid chain; its full sequence is Aspartate--tRNA ligase 1, cytoplasmic (532 aa).

A coiled-coil region spans residues 7–41; sequence LEECGEKISKKESKKRAAKLEKLLRKQEREEATSS. Residues 31-58 form a disordered region; it reads RKQEREEATSSSLSLEEEDESCSSNYGD. Residues 88 to 169 constitute a DNA-binding region (OB); it reads VSIRGRLHKN…QVEIHVRKMY (82 aa). E260 provides a ligand contact to L-aspartate. The aspartate stretch occupies residues 282-285; that stretch reads QLHK. L-aspartate is bound at residue R304. Residues 304–306, 312–314, and E455 contribute to the ATP site; these read RAE and RHL. 2 residues coordinate Mg(2+): E455 and S458. L-aspartate contacts are provided by S458 and R462. 503–506 is an ATP binding site; that stretch reads GLER.

This sequence belongs to the class-II aminoacyl-tRNA synthetase family. Type 2 subfamily.

The protein localises to the cytoplasm. It is found in the cytosol. It carries out the reaction tRNA(Asp) + L-aspartate + ATP = L-aspartyl-tRNA(Asp) + AMP + diphosphate. Functionally, catalyzes the specific attachment of an amino acid to its cognate tRNA in a 2 step reaction: the amino acid (AA) is first activated by ATP to form AA-AMP and then transferred to the acceptor end of the tRNA. The sequence is that of Aspartate--tRNA ligase 1, cytoplasmic from Arabidopsis thaliana (Mouse-ear cress).